The chain runs to 1118 residues: Error-prone DNA polymerase (1118 aa).

Residues 1071 to 1118 form a disordered region; it reads GPQPMGYAKEVGSDRRSRPEIGNAPARQDLATLSEEAEQVMPKGRNFQ.

It belongs to the DNA polymerase type-C family. DnaE2 subfamily.

It is found in the cytoplasm. It carries out the reaction DNA(n) + a 2'-deoxyribonucleoside 5'-triphosphate = DNA(n+1) + diphosphate. Functionally, DNA polymerase involved in damage-induced mutagenesis and translesion synthesis (TLS). It is not the major replicative DNA polymerase. This chain is Error-prone DNA polymerase, found in Mesorhizobium japonicum (strain LMG 29417 / CECT 9101 / MAFF 303099) (Mesorhizobium loti (strain MAFF 303099)).